The primary structure comprises 704 residues: Glycine--tRNA ligase beta subunit (704 aa).

Belongs to the class-II aminoacyl-tRNA synthetase family. As to quaternary structure, tetramer of two alpha and two beta subunits.

The protein resides in the cytoplasm. The catalysed reaction is tRNA(Gly) + glycine + ATP = glycyl-tRNA(Gly) + AMP + diphosphate. This Rhizobium etli (strain CIAT 652) protein is Glycine--tRNA ligase beta subunit.